A 257-amino-acid polypeptide reads, in one-letter code: Thiazole synthase (257 aa).

K95 acts as the Schiff-base intermediate with DXP in catalysis. 1-deoxy-D-xylulose 5-phosphate-binding positions include G156, 182-183 (AG), and 204-205 (NT).

This sequence belongs to the ThiG family. Homotetramer. Forms heterodimers with either ThiH or ThiS.

The protein resides in the cytoplasm. It carries out the reaction [ThiS sulfur-carrier protein]-C-terminal-Gly-aminoethanethioate + 2-iminoacetate + 1-deoxy-D-xylulose 5-phosphate = [ThiS sulfur-carrier protein]-C-terminal Gly-Gly + 2-[(2R,5Z)-2-carboxy-4-methylthiazol-5(2H)-ylidene]ethyl phosphate + 2 H2O + H(+). It participates in cofactor biosynthesis; thiamine diphosphate biosynthesis. Its function is as follows. Catalyzes the rearrangement of 1-deoxy-D-xylulose 5-phosphate (DXP) to produce the thiazole phosphate moiety of thiamine. Sulfur is provided by the thiocarboxylate moiety of the carrier protein ThiS. In vitro, sulfur can be provided by H(2)S. This Fusobacterium nucleatum subsp. nucleatum (strain ATCC 25586 / DSM 15643 / BCRC 10681 / CIP 101130 / JCM 8532 / KCTC 2640 / LMG 13131 / VPI 4355) protein is Thiazole synthase.